A 267-amino-acid polypeptide reads, in one-letter code: Non-homologous end joining protein Ku (267 aa).

The region spanning 10–190 (ISFGLVSFPV…TKYTAKELEL (181 aa)) is the Ku domain.

Belongs to the prokaryotic Ku family. As to quaternary structure, homodimer. Interacts with LigD.

With LigD forms a non-homologous end joining (NHEJ) DNA repair enzyme, which repairs dsDNA breaks with reduced fidelity. Binds linear dsDNA with 5'- and 3'- overhangs but not closed circular dsDNA nor ssDNA. Recruits and stimulates the ligase activity of LigD. The sequence is that of Non-homologous end joining protein Ku from Solibacter usitatus (strain Ellin6076).